The primary structure comprises 317 residues: Serine/threonine-protein phosphatase PP1 isozyme 1 (317 aa).

The Mn(2+) site is built by Asp-75, His-77, Asp-103, and Asn-135. His-136 serves as the catalytic Proton donor. Mn(2+) contacts are provided by His-184 and His-259.

This sequence belongs to the PPP phosphatase family. PP-1 subfamily. Mn(2+) is required as a cofactor.

The enzyme catalyses O-phospho-L-seryl-[protein] + H2O = L-seryl-[protein] + phosphate. It catalyses the reaction O-phospho-L-threonyl-[protein] + H2O = L-threonyl-[protein] + phosphate. This chain is Serine/threonine-protein phosphatase PP1 isozyme 1 (NPP1), found in Nicotiana tabacum (Common tobacco).